Here is a 125-residue protein sequence, read N- to C-terminus: Interleukin-6 (125 aa).

Cysteine 16 and cysteine 26 are disulfide-bonded.

It belongs to the IL-6 superfamily. In terms of assembly, component of a hexamer of two molecules each of IL6, IL6R and IL6ST; first binds to IL6R to associate with the signaling subunit IL6ST. Interacts with IL6R (via the N-terminal ectodomain); this interaction may be affected by IL6R-binding with SORL1, hence decreasing IL6 cis signaling. Interacts with SORL1 (via the N-terminal ectodomain); this interaction leads to IL6 internalization and lysosomal degradation. May form a trimeric complex with the soluble SORL1 ectodomain and soluble IL6R receptor; this interaction might stabilize circulating IL6, hence promoting IL6 trans signaling.

It is found in the secreted. Cytokine with a wide variety of biological functions in immunity, tissue regeneration, and metabolism. Binds to IL6R, then the complex associates to the signaling subunit IL6ST/gp130 to trigger the intracellular IL6-signaling pathway. The interaction with the membrane-bound IL6R and IL6ST stimulates 'classic signaling', whereas the binding of IL6 and soluble IL6R to IL6ST stimulates 'trans-signaling'. Alternatively, 'cluster signaling' occurs when membrane-bound IL6:IL6R complexes on transmitter cells activate IL6ST receptors on neighboring receiver cells. Functionally, IL6 is a potent inducer of the acute phase response. Rapid production of IL6 contributes to host defense during infection and tissue injury, but excessive IL6 synthesis is involved in disease pathology. In the innate immune response, is synthesized by myeloid cells, such as macrophages and dendritic cells, upon recognition of pathogens through toll-like receptors (TLRs) at the site of infection or tissue injury. In the adaptive immune response, is required for the differentiation of B cells into immunoglobulin-secreting cells. Plays a major role in the differentiation of CD4(+) T cell subsets. Essential factor for the development of T follicular helper (Tfh) cells that are required for the induction of germinal-center formation. Required to drive naive CD4(+) T cells to the Th17 lineage. Also required for proliferation of myeloma cells and the survival of plasmablast cells. Its function is as follows. Acts as an essential factor in bone homeostasis and on vessels directly or indirectly by induction of VEGF, resulting in increased angiogenesis activity and vascular permeability. Induces, through 'trans-signaling' and synergistically with IL1B and TNF, the production of VEGF. Involved in metabolic controls, is discharged into the bloodstream after muscle contraction increasing lipolysis and improving insulin resistance. 'Trans-signaling' in central nervous system also regulates energy and glucose homeostasis. Mediates, through GLP-1, crosstalk between insulin-sensitive tissues, intestinal L cells and pancreatic islets to adapt to changes in insulin demand. Also acts as a myokine. Plays a protective role during liver injury, being required for maintenance of tissue regeneration. Also has a pivotal role in iron metabolism by regulating HAMP/hepcidin expression upon inflammation or bacterial infection. Through activation of IL6ST-YAP-NOTCH pathway, induces inflammation-induced epithelial regeneration. This Neovison vison (American mink) protein is Interleukin-6 (IL6).